The following is a 194-amino-acid chain: Holliday junction branch migration complex subunit RuvA (194 aa).

A domain I region spans residues 1-63; it reads MFEYLKGTVA…EDELSLYGFM (63 aa). Positions 64 to 142 are domain II; the sequence is SIEELDMFQK…KTNVVYDYTL (79 aa). Positions 143-151 are flexible linker; that stretch reads FNDDHKDDD. The tract at residues 151-194 is domain III; sequence DEAVQALMALGYSKLESEKAVEAVRDMSLGTEDVIKRALKWLMK.

The protein belongs to the RuvA family. As to quaternary structure, homotetramer. Forms an RuvA(8)-RuvB(12)-Holliday junction (HJ) complex. HJ DNA is sandwiched between 2 RuvA tetramers; dsDNA enters through RuvA and exits via RuvB. An RuvB hexamer assembles on each DNA strand where it exits the tetramer. Each RuvB hexamer is contacted by two RuvA subunits (via domain III) on 2 adjacent RuvB subunits; this complex drives branch migration. In the full resolvosome a probable DNA-RuvA(4)-RuvB(12)-RuvC(2) complex forms which resolves the HJ.

It is found in the cytoplasm. Functionally, the RuvA-RuvB-RuvC complex processes Holliday junction (HJ) DNA during genetic recombination and DNA repair, while the RuvA-RuvB complex plays an important role in the rescue of blocked DNA replication forks via replication fork reversal (RFR). RuvA specifically binds to HJ cruciform DNA, conferring on it an open structure. The RuvB hexamer acts as an ATP-dependent pump, pulling dsDNA into and through the RuvAB complex. HJ branch migration allows RuvC to scan DNA until it finds its consensus sequence, where it cleaves and resolves the cruciform DNA. The protein is Holliday junction branch migration complex subunit RuvA of Alkaliphilus oremlandii (strain OhILAs) (Clostridium oremlandii (strain OhILAs)).